The following is a 333-amino-acid chain: Neuropeptides B/W receptor type 2 (333 aa).

Topologically, residues 1-45 (MQAAGHPEPLDSRGSFSLPTMGANVSQDNGTGHNATFSEPLPFLY) are extracellular. N-linked (GlcNAc...) asparagine glycans are attached at residues asparagine 24, asparagine 29, and asparagine 34. The helical transmembrane segment at 46–69 (VLLPAVYSGICAVGLTGNTAVILV) threads the bilayer. Residues 70–80 (ILRAPKMKTVT) are Cytoplasmic-facing. Residues 81 to 105 (NVFILNLAVADGLFTLVLPVNIAEH) form a helical membrane-spanning segment. Residues 106 to 120 (LLQYWPFGELLCKLV) lie on the Extracellular side of the membrane. A disulfide bridge links cysteine 117 with cysteine 197. Residues 121–140 (LAVDHYNIFSSIYFLAVMSV) form a helical membrane-spanning segment. Residues 141–165 (DRYLVVLATVRSRHMPWRTYRGAKV) lie on the Cytoplasmic side of the membrane. A helical transmembrane segment spans residues 166-185 (ASLCVWLGVTVLVLPFFSFA). The Extracellular portion of the chain corresponds to 186–211 (GVYSNELQVPSCGLSFPWPEQVWFKA). A helical membrane pass occupies residues 212-233 (SRVYTLVLGFVLPVCTICVLYT). The Cytoplasmic segment spans residues 234-257 (DLLRRLRAVRLRSGAKALGKARRK). The chain crosses the membrane as a helical span at residues 258 to 282 (VTVLVLVVLAVCLLCWTPFHLASVV). The Extracellular segment spans residues 283–292 (ALTTDLPQTP). The helical transmembrane segment at 293-307 (LVISMSYVITSLSYA) threads the bilayer. Over 308–333 (NSCLNPFLYAFLDDNFRKNFRSILRC) the chain is Cytoplasmic.

It belongs to the G-protein coupled receptor 1 family. Detected at high levels in caudate nucleus, hippocampus and amygdala; at moderate levels in the adult brain, thalamus, parietal cortex, pituitary gland, adrenal gland and lymph nodes.

The protein resides in the cell membrane. Functionally, interacts specifically with a number of opioid ligands. Receptor for neuropeptides B and W, which may be involved in neuroendocrine system regulation, food intake and the organization of other signals. This Homo sapiens (Human) protein is Neuropeptides B/W receptor type 2 (NPBWR2).